The sequence spans 252 residues: Ribonuclease HII (252 aa).

Positions 41-232 (LLVAGVDEAG…VRLALEGREQ (192 aa)) constitute an RNase H type-2 domain. The a divalent metal cation site is built by Asp47, Glu48, and Asp140.

Belongs to the RNase HII family. Mn(2+) serves as cofactor. The cofactor is Mg(2+).

It is found in the cytoplasm. The enzyme catalyses Endonucleolytic cleavage to 5'-phosphomonoester.. In terms of biological role, endonuclease that specifically degrades the RNA of RNA-DNA hybrids. In Xanthomonas oryzae pv. oryzae (strain KACC10331 / KXO85), this protein is Ribonuclease HII.